The sequence spans 452 residues: Bifunctional protein GlmU (452 aa).

The tract at residues 1–230 is pyrophosphorylase; it reads MSRSRSAIIL…ADEVLGVNSR (230 aa). UDP-N-acetyl-alpha-D-glucosamine is bound by residues 10 to 13, K24, Q75, and 80 to 81; these read LAAG and GT. D105 serves as a coordination point for Mg(2+). Residues G141, E156, N171, and N228 each coordinate UDP-N-acetyl-alpha-D-glucosamine. Mg(2+) is bound at residue N228. Positions 231-251 are linker; that stretch reads ADLAEAEAAFQSRMRQSMMAD. The tract at residues 252-452 is N-acetyltransferase; it reads GVTLIAPETV…ARKARKDSQT (201 aa). 2 residues coordinate UDP-N-acetyl-alpha-D-glucosamine: R317 and K335. The active-site Proton acceptor is H347. UDP-N-acetyl-alpha-D-glucosamine contacts are provided by Y350 and N361. Residues A364, 370-371, S389, T407, and R424 contribute to the acetyl-CoA site; that span reads NY.

In the N-terminal section; belongs to the N-acetylglucosamine-1-phosphate uridyltransferase family. It in the C-terminal section; belongs to the transferase hexapeptide repeat family. Homotrimer. Mg(2+) serves as cofactor.

The protein localises to the cytoplasm. The catalysed reaction is alpha-D-glucosamine 1-phosphate + acetyl-CoA = N-acetyl-alpha-D-glucosamine 1-phosphate + CoA + H(+). It carries out the reaction N-acetyl-alpha-D-glucosamine 1-phosphate + UTP + H(+) = UDP-N-acetyl-alpha-D-glucosamine + diphosphate. The protein operates within nucleotide-sugar biosynthesis; UDP-N-acetyl-alpha-D-glucosamine biosynthesis; N-acetyl-alpha-D-glucosamine 1-phosphate from alpha-D-glucosamine 6-phosphate (route II): step 2/2. It functions in the pathway nucleotide-sugar biosynthesis; UDP-N-acetyl-alpha-D-glucosamine biosynthesis; UDP-N-acetyl-alpha-D-glucosamine from N-acetyl-alpha-D-glucosamine 1-phosphate: step 1/1. It participates in bacterial outer membrane biogenesis; LPS lipid A biosynthesis. Its function is as follows. Catalyzes the last two sequential reactions in the de novo biosynthetic pathway for UDP-N-acetylglucosamine (UDP-GlcNAc). The C-terminal domain catalyzes the transfer of acetyl group from acetyl coenzyme A to glucosamine-1-phosphate (GlcN-1-P) to produce N-acetylglucosamine-1-phosphate (GlcNAc-1-P), which is converted into UDP-GlcNAc by the transfer of uridine 5-monophosphate (from uridine 5-triphosphate), a reaction catalyzed by the N-terminal domain. The protein is Bifunctional protein GlmU of Maricaulis maris (strain MCS10) (Caulobacter maris).